The following is a 94-amino-acid chain: Potassium channel protein kcv (94 aa).

Residues 14-34 (FMIHLFILAMFVMIYKFFPGG) traverse the membrane as a helical segment. The N-linked (GlcNAc...) asparagine; by host glycan is linked to N38. A helical membrane pass occupies residues 74 to 94 (TGAKLCTIAHIVTVFFIVLTL).

This sequence belongs to the two pore domain potassium channel (TC 1.A.1.12) family.

It localises to the membrane. Potassium-selective channel essential in the virus replication cycle. May be involved in preventing multiple infections (Potential). The chain is Potassium channel protein kcv (A250R) from Paramecium bursaria Chlorella virus 1 (PBCV-1).